Reading from the N-terminus, the 4690-residue chain is Nonribosomal peptide synthetase sidN (4690 aa).

Residues 238-656 (ARVRENPGRI…LGRLSSDQIK (419 aa)) form an adenylation 1 region. The 78-residue stretch at 779 to 856 (SSSIPMLQSV…DLDTKAQQAL (78 aa)) folds into the Carrier 1 domain. The residue at position 816 (Ser-816) is an O-(pantetheine 4'-phosphoryl)serine. Residues 924-1175 (APGGKAFIQH…AFGNTMSDRF (252 aa)) form a condensation 1 region. The segment at 1349–1760 (EFAQKSPNAI…GRKDDLVKIR (412 aa)) is adenylation 2. One can recognise a Carrier 2 domain in the interval 1889 to 1965 (PAWCIKHRPL…DLINHLSVKR (77 aa)). Ser-1926 bears the O-(pantetheine 4'-phosphoryl)serine mark. The segment at 2001-2285 (PTTVFQDGML…SERLLESQLV (285 aa)) is condensation 2. The interval 2464 to 2869 (TWAKTHPEWK…GRKDEQVKVR (406 aa)) is adenylation 3. The 78-residue stretch at 3002-3079 (RDLTSIEKQI…ELGRMKNALK (78 aa)) folds into the Carrier 3 domain. Ser-3040 is modified (O-(pantetheine 4'-phosphoryl)serine). The segment at 3121–3530 (CMPLQEVLVA…QMESLVTSFT (410 aa)) is condensation 3. The region spanning 3564–3637 (SVLEQQIRDV…KLATHIQTTS (74 aa)) is the Carrier 4 domain. Ser-3598 is modified (O-(pantetheine 4'-phosphoryl)serine). The interval 3679-4087 (VYPLTPLQAG…FESIRKHPDE (409 aa)) is condensation 4. The Carrier 5 domain occupies 4119–4195 (SAIDQFLDPL…KLCEVAFAKS (77 aa)). Ser-4156 is subject to O-(pantetheine 4'-phosphoryl)serine. The segment at 4262–4589 (WVFKAENGLD…FNAHLNILWN (328 aa)) is condensation 5.

This sequence belongs to the NRP synthetase family.

Its pathway is siderophore biosynthesis. Its function is as follows. Nonribosomal peptide synthetase required for the biosynthetis of epichloenin A, an extracellular siderophore that plays a crucial role in endophyte-grass symbioses. SidN assembles epichloenin A by activating and incorporating three trans-anhydromevalonylhydroxyornithine (trans-AMHO), 1 glutamine and 4 glycine moieties. Trans-AMHO is produced from L-ornithine via 2 steps involving a L-ornithine N(5)-monooxygenase and an AHMO-N(5)-transacylase that have still to be identified. The third adenylation domain (A3) of sidN incorporates the hydroxamate groups of the siderophore which forms an octahedral iron complex. The other component amino acids are assembled by sidN adenylation domains A1 and A2. The chain is Nonribosomal peptide synthetase sidN from Epichloe festucae (strain Fl1).